The following is a 306-amino-acid chain: Enoyl-CoA isomerase/hydratase MYCGRDRAFT_76805 (306 aa).

Substrate-binding positions include 103 to 107 (AGADL) and glycine 150.

Belongs to the enoyl-CoA hydratase/isomerase family.

It carries out the reaction a (3S)-3-hydroxyacyl-CoA = a (2E)-enoyl-CoA + H2O. The enzyme catalyses a 4-saturated-(3S)-3-hydroxyacyl-CoA = a (3E)-enoyl-CoA + H2O. It participates in siderophore biosynthesis. Its function is as follows. Enoyl-CoA isomerase/hydratase involved in the biosynthesis of a ferrichrome A-like siderophore which may contribute to organismal virulence. The first step of siderophore biosynthesis is performed by the HMG-CoA synthase (HMGS) MYCGRDRAFT_54740 which catalyzes the generation of HMG-CoA and CoA using acetoacetyl-CoA and acetyl-CoA as substrates. The enoyl-CoA isomerase/hydratase MYCGRDRAFT_76805 then catalyzes the conversion of HMG-CoA to methylglutaconyl-CoA. The acyltransferase MYCGRDRAFT_85486 then fuses methylglutaconyl-CoA with hydroxyornithine to yield methylglutaconyl hydroxyornithine. Methylglutaconyl hydroxyornithine is then available for use by the nonribosomal peptide synthetase NRPS2 to generate the ferrichrome A-like siderophore. In Zymoseptoria tritici (strain CBS 115943 / IPO323) (Speckled leaf blotch fungus), this protein is Enoyl-CoA isomerase/hydratase MYCGRDRAFT_76805.